The following is a 263-amino-acid chain: Putative TATA-binding protein pB263R (263 aa).

The protein belongs to the asfivirus B263R family.

Functionally, putative TATA-binding protein. This Ornithodoros (relapsing fever ticks) protein is Putative TATA-binding protein pB263R.